The following is a 342-amino-acid chain: Ribosomal RNA small subunit methyltransferase H (342 aa).

Residues 43–45, Asp61, Phe87, Asp108, and Gln115 each bind S-adenosyl-L-methionine; that span reads GGY. A disordered region spans residues 322–342; that stretch reads ALDEASDGMNLPPLAELEKSR.

This sequence belongs to the methyltransferase superfamily. RsmH family.

It is found in the cytoplasm. It carries out the reaction cytidine(1402) in 16S rRNA + S-adenosyl-L-methionine = N(4)-methylcytidine(1402) in 16S rRNA + S-adenosyl-L-homocysteine + H(+). Its function is as follows. Specifically methylates the N4 position of cytidine in position 1402 (C1402) of 16S rRNA. The protein is Ribosomal RNA small subunit methyltransferase H of Hyphomonas neptunium (strain ATCC 15444).